A 156-amino-acid chain; its full sequence is Small ribosomal subunit protein uS7 (156 aa).

This sequence belongs to the universal ribosomal protein uS7 family. In terms of assembly, part of the 30S ribosomal subunit. Contacts proteins S9 and S11.

In terms of biological role, one of the primary rRNA binding proteins, it binds directly to 16S rRNA where it nucleates assembly of the head domain of the 30S subunit. Is located at the subunit interface close to the decoding center, probably blocks exit of the E-site tRNA. The protein is Small ribosomal subunit protein uS7 of Ligilactobacillus salivarius (strain UCC118) (Lactobacillus salivarius).